The primary structure comprises 71 residues: Small ribosomal subunit protein bS21 (71 aa).

The segment at 40–71 (KPTQERKRKAAAAVKRNIRRTSRDVTKRKRLY) is disordered. Residues 45 to 71 (RKRKAAAAVKRNIRRTSRDVTKRKRLY) show a composition bias toward basic residues.

Belongs to the bacterial ribosomal protein bS21 family.

The protein is Small ribosomal subunit protein bS21 of Xylella fastidiosa (strain M23).